The sequence spans 409 residues: DNA primase DnaG (409 aa).

A Toprim domain is found at 175 to 261 (DAIIVVEGRA…EVEELTRKEI (87 aa)). Mg(2+) contacts are provided by Glu181, Asp223, and Asp225. The segment covering 280 to 289 (ERPKDKEREK) has biased composition (basic and acidic residues). The interval 280 to 322 (ERPKDKEREKGKKPKPKKRPERRGRPRKKKARPKRGPQERRLL) is disordered. Basic residues predominate over residues 290–314 (GKKPKPKKRPERRGRPRKKKARPKR).

This sequence belongs to the archaeal DnaG primase family. As to quaternary structure, forms a ternary complex with MCM helicase and DNA. Component of the archaeal exosome complex. Requires Mg(2+) as cofactor.

The catalysed reaction is ssDNA + n NTP = ssDNA/pppN(pN)n-1 hybrid + (n-1) diphosphate.. Functionally, RNA polymerase that catalyzes the synthesis of short RNA molecules used as primers for DNA polymerase during DNA replication. Also part of the exosome, which is a complex involved in RNA degradation. Acts as a poly(A)-binding protein that enhances the interaction between heteromeric, adenine-rich transcripts and the exosome. This Methanopyrus kandleri (strain AV19 / DSM 6324 / JCM 9639 / NBRC 100938) protein is DNA primase DnaG.